A 2294-amino-acid chain; its full sequence is Reducing polyketide synthase BOA9 (2294 aa).

Residues 4–409 (PEPVAIIGMG…GANATAIVEA (406 aa)) form the Ketosynthase family 3 (KS3) domain. Residues 537 to 853 (IFTGQGAQNA…DYAATLVRGQ (317 aa)) form a malonyl-CoA:ACP transacylase (MAT) domain region. Residue Ser630 is the For malonyltransferase activity of the active site. Positions 930-1067 (HDLLGAILPG…GTVTKKKAVT (138 aa)) are N-terminal hotdog fold. The tract at residues 930 to 1104 (HDLLGAILPG…LNYGPAFNGL (175 aa)) is dehydratase (DH) domain. The PKS/mFAS DH domain maps to 930–1236 (HDLLGAILPG…CTQYSEALDD (307 aa)). The active-site Proton acceptor; for dehydratase activity is the His962. The C-terminal hotdog fold stretch occupies residues 1078–1236 (QEPKAARTWY…CTQYSEALDD (159 aa)). The Proton donor; for dehydratase activity role is filled by Asp1142. An enoyl reductase (ER) domain region spans residues 1618–1908 (GIFDTIHFKD…KNSRIGRVVV (291 aa)). Positions 1934 to 2107 (VHTYLLGVLE…LPATTISLTV (174 aa)) are ketoreductase (KR) domain. One can recognise a Carrier domain in the interval 2214-2292 (LLLPDILEMI…SLAKKIYDIR (79 aa)). Ser2251 carries the post-translational modification O-(pantetheine 4'-phosphoryl)serine.

It functions in the pathway polyketide biosynthesis. Its function is as follows. Reducing polyketide synthase; part of the gene cluster B that mediates the biosynthesis of botcinic acid and its botcinin derivatives, acetate-derived polyketides that contribute to virulence when combined with the sesquiterpene botrydial. Botcinic acid and its derivatives have been shown to induce chlorosis and necrosis during host plant infection, but also have antifungal activities. Two polyketide synthases, BOA6 and BOA9, are involved in the biosynthesis of botcinins. BOA6 mediates the formation of the per-methylated tetraketide core by condensation of four units of malonyl-CoA with one unit of acetyl-CoA, which would be methylated in activated methylene groups to yield a bicyclic acid intermediate that could then either be converted to botrylactone derivatives or lose the starter acetate unit through a retro-Claisen type C-C bond cleavage to yield botcinin derivatives. The second polyketide synthase, BOA9, is probably required for the biosynthesis of the tetraketide side chain of botcinins. The methyltransferase (MT) domain within BOA6 is probably responsible for the incorporation of four methyl groups. The trans-enoyl reductase BOA5 might take over the enoyl reductase function of BOA6 that misses an ER domain. The monooxygenases BOA2, BOA3 and BOA4 might be involved in further hydroxylations at C4, C5 and C8, whereas BOA7, close to BOA9, could potentially be involved in the hydroxylation at C4 in the side chain of botcinins. In Botryotinia fuckeliana (strain B05.10) (Noble rot fungus), this protein is Reducing polyketide synthase BOA9.